The chain runs to 88 residues: EMBRYO SURROUNDING FACTOR 1-like protein 3 (88 aa).

Positions 1–22 are cleaved as a signal peptide; it reads MKLSQIALICIVIASLFAMHEC. 3 disulfide bridges follow: Cys-41/Cys-56, Cys-54/Cys-80, and Cys-57/Cys-67.

The protein belongs to the MEG family. In terms of tissue distribution, expressed in stems, leaves and flowers.

This chain is EMBRYO SURROUNDING FACTOR 1-like protein 3 (ESFL3), found in Arabidopsis thaliana (Mouse-ear cress).